A 379-amino-acid chain; its full sequence is All-trans-retinol dehydrogenase [NAD(+)] ADH4 (379 aa).

Thr1 is subject to N-acetylthreonine. Zn(2+) contacts are provided by Cys46, His68, Cys98, Cys101, Cys104, Cys112, and Cys179. Residues 204 to 209 (GLGGVG), Asp228, Lys233, 297 to 299 (VGV), and Arg374 each bind NAD(+).

Belongs to the zinc-containing alcohol dehydrogenase family. Class-II subfamily. As to quaternary structure, homodimer. Requires Zn(2+) as cofactor.

The protein localises to the cytoplasm. The enzyme catalyses all-trans-retinol + NAD(+) = all-trans-retinal + NADH + H(+). It catalyses the reaction 9-cis-retinol + NAD(+) = 9-cis-retinal + NADH + H(+). It carries out the reaction 20-oxo-(5Z,8Z,11Z,14Z)-eicosatetraenoate + NAD(+) + H2O = (5Z,8Z,11Z,14Z)-eicosatetraenedioate + NADH + 2 H(+). The catalysed reaction is 20-hydroxy-(5Z,8Z,11Z,14Z)-eicosatetraenoate + NAD(+) = 20-oxo-(5Z,8Z,11Z,14Z)-eicosatetraenoate + NADH + H(+). The enzyme catalyses 1,4-benzoquinone + NADH + H(+) = hydroquinone + NAD(+). Its activity is regulated as follows. Oxidation of 20-HETE is inhibited by low concentrations of N-heptylformamide. Oxidation of 20-HETE is a decreased by 55-65% by either all-trans-retinol or all-trans-retinoic acid. Strongly inhibited by omega-hydroxy fatty acids. Functionally, catalyzes the NAD-dependent oxidation of either all-trans-retinol or 9-cis-retinol. Also oxidizes long chain omega-hydroxy fatty acids, such as 20-HETE, producing both the intermediate aldehyde, 20-oxoarachidonate and the end product, a dicarboxylic acid, (5Z,8Z,11Z,14Z)-eicosatetraenedioate. Also catalyzes the reduction of benzoquinones. This Struthio camelus (Common ostrich) protein is All-trans-retinol dehydrogenase [NAD(+)] ADH4.